Reading from the N-terminus, the 449-residue chain is Tapasin (449 aa).

A signal peptide spans 1 to 20 (MKPLSLLLAVASALGTAVSA). The Lumenal portion of the chain corresponds to 21 to 413 (GPAVIECWMV…GLSGPSLEDS (393 aa)). C27 and C91 form a disulfide bridge. Residue N253 is glycosylated (N-linked (GlcNAc...) asparagine). Residues 292–399 (PKISLTPAPL…PTLGRSAEVT (108 aa)) enclose the Ig-like C1-type domain. Cysteines 315 and 382 form a disulfide. The chain crosses the membrane as a helical span at residues 414-434 (VGLFLSAFLLLGLIKALGWVA). The Cytoplasmic portion of the chain corresponds to 435 to 449 (ASRSTSKDPKEKKAQ).

In terms of assembly, heterodimer with PDIA3; disulfide-linked. Obligatory mediator for the interaction between newly assembled MHC class I molecules, calreticulin, PDIA3 and TAP. Up to 4 MHC class I/tapasin complexes bind to 1 TAP. Interacts with HLA-G-B2M complex; this interaction is required for loading of high affinity peptides. On its own or as part of MHC class I peptide loading complex, interacts with ligand-free MR1 or MR1-B2M complex, providing for stable MR1 pools ready for metabolite antigen processing.

Its subcellular location is the endoplasmic reticulum membrane. In terms of biological role, involved in the association of MHC class I with transporter associated with antigen processing (TAP) and in the assembly of MHC class I with peptide (peptide loading). This is Tapasin (TAPBP) from Canis lupus familiaris (Dog).